Consider the following 267-residue polypeptide: Phosphatidylglycerol--prolipoprotein diacylglyceryl transferase (267 aa).

Helical transmembrane passes span 17–37 (LNIR…WLLA), 56–76 (LVTY…TLFY), 91–111 (IWNG…AIWL), 120–140 (LFEV…AGRL), 173–193 (QLYE…LFSA), 199–219 (MAVS…VEFF), and 236–256 (MGQI…GFAM). R139 lines the a 1,2-diacyl-sn-glycero-3-phospho-(1'-sn-glycerol) pocket.

It belongs to the Lgt family.

It localises to the cell inner membrane. It catalyses the reaction L-cysteinyl-[prolipoprotein] + a 1,2-diacyl-sn-glycero-3-phospho-(1'-sn-glycerol) = an S-1,2-diacyl-sn-glyceryl-L-cysteinyl-[prolipoprotein] + sn-glycerol 1-phosphate + H(+). It participates in protein modification; lipoprotein biosynthesis (diacylglyceryl transfer). In terms of biological role, catalyzes the transfer of the diacylglyceryl group from phosphatidylglycerol to the sulfhydryl group of the N-terminal cysteine of a prolipoprotein, the first step in the formation of mature lipoproteins. This is Phosphatidylglycerol--prolipoprotein diacylglyceryl transferase from Oleidesulfovibrio alaskensis (strain ATCC BAA-1058 / DSM 17464 / G20) (Desulfovibrio alaskensis).